Here is a 424-residue protein sequence, read N- to C-terminus: O-seryl-dTMP PLP-dependent decarboxylase (424 aa).

This sequence belongs to the pyridoxal-phosphate-dependent aminodecarboxylase family.

The enzyme catalyses 5-O-(L-seryl)-dTMP in DNA + H(+) = 5-aminoethoxy-methyl-dUMP in DNA + CO2. Its function is as follows. Converts 5-O-serinylthymidine (O-SerT) into 5-aminoethoxy-2'-deoxymethyluridine (5-NeOmdU) as a step in the pathway leading to thymidine hypermodifications in the viral genome. As a final result of the pathway of hypermodification, 5-NeOmdU substitutes for about 40% of the thymidines in the viral DNA. These modifications probably prevent degradation of viral genome by the host restriction-modification antiviral defense system. In Salmonella phage ViI, this protein is O-seryl-dTMP PLP-dependent decarboxylase.